Consider the following 224-residue polypeptide: ATP-dependent Clp protease proteolytic subunit 1 (224 aa).

The Nucleophile role is filled by Ser120. His145 is a catalytic residue.

It belongs to the peptidase S14 family. Fourteen ClpP subunits assemble into 2 heptameric rings which stack back to back to give a disk-like structure with a central cavity, resembling the structure of eukaryotic proteasomes.

It is found in the cytoplasm. The catalysed reaction is Hydrolysis of proteins to small peptides in the presence of ATP and magnesium. alpha-casein is the usual test substrate. In the absence of ATP, only oligopeptides shorter than five residues are hydrolyzed (such as succinyl-Leu-Tyr-|-NHMec, and Leu-Tyr-Leu-|-Tyr-Trp, in which cleavage of the -Tyr-|-Leu- and -Tyr-|-Trp bonds also occurs).. Cleaves peptides in various proteins in a process that requires ATP hydrolysis. Has a chymotrypsin-like activity. Plays a major role in the degradation of misfolded proteins. The polypeptide is ATP-dependent Clp protease proteolytic subunit 1 (Prochlorococcus marinus (strain MIT 9313)).